The sequence spans 1712 residues: U3 small nucleolar RNA-associated protein 10 (1712 aa).

HEAT repeat units lie at residues Glu164–Glu202, Thr490–Ser528, Thr564–Gly605, Thr987–His1025, Val1236–Lys1275, Glu1605–Ala1646, and Leu1667–Glu1705.

It belongs to the HEATR1/UTP10 family. Component of the ribosomal small subunit (SSU) processome.

The protein resides in the nucleus. It localises to the nucleolus. Involved in nucleolar processing of pre-18S ribosomal RNA. Involved in ribosome biosynthesis. The chain is U3 small nucleolar RNA-associated protein 10 from Phaeosphaeria nodorum (strain SN15 / ATCC MYA-4574 / FGSC 10173) (Glume blotch fungus).